Reading from the N-terminus, the 90-residue chain is Small ribosomal subunit protein uS15c (90 aa).

It belongs to the universal ribosomal protein uS15 family. As to quaternary structure, part of the 30S ribosomal subunit.

Its subcellular location is the plastid. The protein localises to the chloroplast. This is Small ribosomal subunit protein uS15c (rps15-A) from Pelargonium hortorum (Common geranium).